Here is a 337-residue protein sequence, read N- to C-terminus: Pyridoxal 5'-phosphate synthase subunit PdxS (337 aa).

Aspartate 63 lines the D-ribose 5-phosphate pocket. Lysine 120 acts as the Schiff-base intermediate with D-ribose 5-phosphate in catalysis. Glycine 192 is a binding site for D-ribose 5-phosphate. Position 204 (lysine 204) interacts with D-glyceraldehyde 3-phosphate. Residues glycine 253 and 274–275 contribute to the D-ribose 5-phosphate site; that span reads GS.

This sequence belongs to the PdxS/SNZ family. In the presence of PdxT, forms a dodecamer of heterodimers.

The catalysed reaction is aldehydo-D-ribose 5-phosphate + D-glyceraldehyde 3-phosphate + L-glutamine = pyridoxal 5'-phosphate + L-glutamate + phosphate + 3 H2O + H(+). Its pathway is cofactor biosynthesis; pyridoxal 5'-phosphate biosynthesis. Its function is as follows. Catalyzes the formation of pyridoxal 5'-phosphate from ribose 5-phosphate (RBP), glyceraldehyde 3-phosphate (G3P) and ammonia. The ammonia is provided by the PdxT subunit. Can also use ribulose 5-phosphate and dihydroxyacetone phosphate as substrates, resulting from enzyme-catalyzed isomerization of RBP and G3P, respectively. The chain is Pyridoxal 5'-phosphate synthase subunit PdxS from Aeropyrum pernix (strain ATCC 700893 / DSM 11879 / JCM 9820 / NBRC 100138 / K1).